Reading from the N-terminus, the 477-residue chain is Diacylglycerol O-acyltransferase 1-2 (477 aa).

The disordered stretch occupies residues 1–48 (MAPPPSLAPDRGGGEPDDALRLRARAAAAAGDAPAPQQQQEQRHQEQQ). Residues 12–21 (GGGEPDDALR) are compositionally biased toward basic and acidic residues. A compositionally biased stretch (low complexity) spans 25-40 (RAAAAAGDAPAPQQQQ). The next 7 membrane-spanning stretches (helical) occupy residues 79–99 (HAGL…RLII), 123–143 (WPLL…LMVE), 155–175 (VVIL…VVVI), 182–202 (VLSG…LVSF), 230–250 (NIKW…TLCY), 263–283 (GWVV…GFII), and 319–339 (VWLC…AELL). Residues 346 to 352 (FYKDWWN) carry the FYXDWWN motif motif. The next 3 membrane-spanning stretches (helical) occupy residues 387–407 (GVAI…CVAV), 409–429 (CHIF…LVFL), and 442–462 (VGNM…CVLL). His401 is an active-site residue.

Belongs to the membrane-bound acyltransferase family. Sterol o-acyltransferase subfamily.

It localises to the endoplasmic reticulum membrane. It carries out the reaction an acyl-CoA + a 1,2-diacyl-sn-glycerol = a triacyl-sn-glycerol + CoA. It functions in the pathway glycerolipid metabolism; triacylglycerol biosynthesis. Involved in triacylglycerol (TAG) synthesis. Catalyzes the acylation of the sn-3 hydroxy group of sn-1,2-diacylglycerol using acyl-CoA. This is Diacylglycerol O-acyltransferase 1-2 from Oryza sativa subsp. japonica (Rice).